Reading from the N-terminus, the 321-residue chain is Protein ATP1B4 (321 aa).

Residues methionine 1–methionine 41 are disordered. At methionine 1–serine 72 the chain is on the cytoplasmic side. The span at glycine 14 to methionine 41 shows a compositional bias: basic and acidic residues. The chain crosses the membrane as a helical span at residues tryptophan 73–phenylalanine 93. Residues cysteine 94–lysine 321 lie on the Extracellular side of the membrane. N-linked (GlcNAc...) asparagine glycans are attached at residues asparagine 132, asparagine 176, and asparagine 193. A disulfide bond links cysteine 165 and cysteine 184. Cystine bridges form between cysteine 194–cysteine 210 and cysteine 233–cysteine 293. N-linked (GlcNAc...) asparagine glycosylation is found at asparagine 239, asparagine 252, and asparagine 270.

Belongs to the X(+)/potassium ATPases subunit beta family. In terms of assembly, composed of two subunits: alpha (catalytic) and beta (accessory). Glycosylated. As to expression, expressed in skeletal muscle, intestine, heart, brain, retina, inner ear and skin.

Its subcellular location is the membrane. This is the non-catalytic component of the active enzyme, which catalyzes the hydrolysis of ATP coupled with the exchange of Na(+) and K(+) ions across the plasma membrane. In Gallus gallus (Chicken), this protein is Protein ATP1B4 (ATP1B4).